A 138-amino-acid polypeptide reads, in one-letter code: Rubber elongation factor protein (138 aa).

N-acetylalanine is present on Ala-2.

Belongs to the REF/SRPP family. In terms of assembly, in solution, able to form amyloid fibers and aggregates rich in beta-sheets. Interaction with membrane stabilizes the protein, inhibiting the amyloid state and aggregation. In terms of processing, not glycosylated. As to expression, localized in all laticifer layers.

Its subcellular location is the cytoplasm. May be part of the rubber biosynthesis machinery. Plays a role in rubber elongation. The chain is Rubber elongation factor protein from Hevea brasiliensis (Para rubber tree).